We begin with the raw amino-acid sequence, 766 residues long: Darlin (766 aa).

4 ARM repeats span residues 82-119 (QLFE…NLTY), 167-208 (DFIQ…NLVD), 423-464 (EPNC…NLTL), and 465-537 (PTIN…ASMD). Positions 561–585 (EEKEKTIEKTDEKTDEKTNEKKQSK) are disordered. One copy of the ARM 5 repeat lies at 610-649 (HQEKMKQLIEESVEPFFSLLQSPFPILQVEGAKGLVLLIK).

It belongs to the RAP1GDS1 family. In terms of assembly, binds to small GTPases racE, racC but not rab21. Binds preferentially to GDP-bound racE.

Part of a signaling pathway that initiates the aggregation and leads to the formation of aggregation centers or streams. Not essential for cytokinesis, pinocytosis or phagocytosis. Not essential for development, except in starvation-induced aggregation. This Dictyostelium discoideum (Social amoeba) protein is Darlin (darA).